The following is a 266-amino-acid chain: Histidinol-phosphatase (266 aa).

Residues E69, D84, I86, and D87 each coordinate Mg(2+). E69 is a substrate binding site. Substrate is bound by residues 86 to 89 (IDGT), R190, and D218. Residue D218 coordinates Mg(2+).

Belongs to the inositol monophosphatase superfamily. The cofactor is Mg(2+).

It carries out the reaction L-histidinol phosphate + H2O = L-histidinol + phosphate. It functions in the pathway amino-acid biosynthesis; L-histidine biosynthesis; L-histidine from 5-phospho-alpha-D-ribose 1-diphosphate: step 8/9. Its function is as follows. Catalyzes the dephosphorylation of histidinol-phosphate to histidinol, the direct precursor of histidine. The polypeptide is Histidinol-phosphatase (Streptomyces coelicolor (strain ATCC BAA-471 / A3(2) / M145)).